A 512-amino-acid chain; its full sequence is tRNA-2-methylthio-N(6)-dimethylallyladenosine synthase (512 aa).

The region spanning R23–H139 is the MTTase N-terminal domain. [4Fe-4S] cluster-binding residues include C32, C68, C102, C176, C180, and C183. The Radical SAM core domain occupies R162–E398. One can recognise a TRAM domain in the interval R401–I469. Residues A477–C512 form a disordered region.

This sequence belongs to the methylthiotransferase family. MiaB subfamily. In terms of assembly, monomer. [4Fe-4S] cluster is required as a cofactor.

The protein localises to the cytoplasm. The enzyme catalyses N(6)-dimethylallyladenosine(37) in tRNA + (sulfur carrier)-SH + AH2 + 2 S-adenosyl-L-methionine = 2-methylsulfanyl-N(6)-dimethylallyladenosine(37) in tRNA + (sulfur carrier)-H + 5'-deoxyadenosine + L-methionine + A + S-adenosyl-L-homocysteine + 2 H(+). Its function is as follows. Catalyzes the methylthiolation of N6-(dimethylallyl)adenosine (i(6)A), leading to the formation of 2-methylthio-N6-(dimethylallyl)adenosine (ms(2)i(6)A) at position 37 in tRNAs that read codons beginning with uridine. This is tRNA-2-methylthio-N(6)-dimethylallyladenosine synthase from Mycolicibacterium smegmatis (strain ATCC 700084 / mc(2)155) (Mycobacterium smegmatis).